Consider the following 316-residue polypeptide: L-lactate dehydrogenase 3 (316 aa).

Positions 16, 37, 42, and 68 each coordinate NAD(+). Residue arginine 91 participates in substrate binding. Residues serine 104, 121–123 (ASN), and threonine 146 each bind NAD(+). Substrate is bound at residue 123 to 126 (NPVD). 151–154 (DSSR) contacts substrate. Beta-D-fructose 1,6-bisphosphate contacts are provided by arginine 156 and histidine 171. The active-site Proton acceptor is histidine 178. A substrate-binding site is contributed by threonine 233.

It belongs to the LDH/MDH superfamily. LDH family. Homotetramer.

It is found in the cytoplasm. It catalyses the reaction (S)-lactate + NAD(+) = pyruvate + NADH + H(+). It participates in fermentation; pyruvate fermentation to lactate; (S)-lactate from pyruvate: step 1/1. Allosterically activated by fructose 1,6-bisphosphate (FBP). In terms of biological role, catalyzes the conversion of lactate to pyruvate. In Bacillus anthracis, this protein is L-lactate dehydrogenase 3.